The following is a 335-amino-acid chain: uncharacterized protein (335 aa).

It belongs to the glycosyltransferase group 1 family. Glycosyltransferase 4 subfamily.

This is an uncharacterized protein from Sulfolobus islandicus rod-shaped virus 1 (SIRV-1).